The primary structure comprises 351 residues: MAGRSSNRSIGTVAMRWHGDRLELLDQRLLPAEEHWIVADGASAVAQCITDMVVRGAPAIGISAAYGVALAARHAGGGDWQAEIKQAIRVLAKSRPTAVNLFWALERMEKVFHACHSLDEATDRLAAEAVRLHEDDLAANLAMADYALEVMNPDKPIAVLTHCNTGALATGGYGTALGVIRRLHEEKLLKRVYADETRPWLQGSRLTAWELTRDHIPVTLNADGAAAAIMASGKVKWIVVGADRITANGDVANKIGTYNLAVLARHHKIGFMVVAPSSTVDMSLESGKDIPIEEREGTEVREIRGIPLAPAGVQVFNPVFDVTPASLIDAIVTEKGAVRNPNITGMRALFT.

Substrate is bound by residues 55–57 (RGA), arginine 95, and glutamine 202. Aspartate 243 serves as the catalytic Proton donor. 253–254 (NK) is a binding site for substrate.

It belongs to the eIF-2B alpha/beta/delta subunits family. MtnA subfamily.

The enzyme catalyses 5-(methylsulfanyl)-alpha-D-ribose 1-phosphate = 5-(methylsulfanyl)-D-ribulose 1-phosphate. The protein operates within amino-acid biosynthesis; L-methionine biosynthesis via salvage pathway; L-methionine from S-methyl-5-thio-alpha-D-ribose 1-phosphate: step 1/6. Its function is as follows. Catalyzes the interconversion of methylthioribose-1-phosphate (MTR-1-P) into methylthioribulose-1-phosphate (MTRu-1-P). This chain is Methylthioribose-1-phosphate isomerase, found in Marinobacter nauticus (strain ATCC 700491 / DSM 11845 / VT8) (Marinobacter aquaeolei).